A 540-amino-acid polypeptide reads, in one-letter code: Phosphoenolpyruvate carboxykinase (ATP) (540 aa).

Arg65 provides a ligand contact to substrate. Lys87 carries the N6-acetyllysine modification. Substrate contacts are provided by Tyr207 and Lys213. ATP-binding positions include Lys213, His232, and 248 to 256; that span reads GLSGTGKTT. Lys213 and His232 together coordinate Mn(2+). Asp269 contributes to the Mn(2+) binding site. ATP is bound by residues Glu297, Arg333, 449-450, and Thr455; that span reads RI. Substrate is bound at residue Arg333. Lys523 carries the N6-acetyllysine modification.

The protein belongs to the phosphoenolpyruvate carboxykinase (ATP) family. Monomer. The cofactor is Mn(2+).

The protein localises to the cytoplasm. The enzyme catalyses oxaloacetate + ATP = phosphoenolpyruvate + ADP + CO2. It functions in the pathway carbohydrate biosynthesis; gluconeogenesis. In terms of biological role, involved in the gluconeogenesis. Catalyzes the conversion of oxaloacetate (OAA) to phosphoenolpyruvate (PEP) through direct phosphoryl transfer between the nucleoside triphosphate and OAA. The protein is Phosphoenolpyruvate carboxykinase (ATP) of Shigella dysenteriae serotype 1 (strain Sd197).